Consider the following 335-residue polypeptide: MKYIKSPTMALAMSTLIMSTLMAVSSANWMFLWGAMELNLLSFIPIMMQSNNNQETEGAVKYFLAQALGSALLLMSSTSMWMTFSMISNFMPLTLMAAIMLKLGSVPCHFWYPSVMASISWVSCLILSSWQKLAPLSILAFLLPQKNMNFMLSMAAMNALLGGVIGMNQTQLRTIMAYSSIGHIGWMMSLAAVYKPSSCIMYFVVYCILITPLFMTMGYLNMFSTKHMSKLSSYSSTVHMALLMVLLSLGGLPPFTGFMPKLMTIMLLMQSMKIILLILIAGSIMNLFFYLNIIISSMPLPPHLKNVDSTDIKCSLKFVIPICTLSLGLSPFIML.

11 helical membrane passes run 7–27 (PTMALAMSTLIMSTLMAVSSA), 28–48 (NWMFLWGAMELNLLSFIPIMM), 58–78 (GAVKYFLAQALGSALLLMSST), 81–101 (WMTFSMISNFMPLTLMAAIML), 110–130 (FWYPSVMASISWVSCLILSSW), 147–167 (NMNFMLSMAAMNALLGGVIGM), 174–194 (TIMAYSSIGHIGWMMSLAAVY), 200–220 (IMYFVVYCILITPLFMTMGYL), 240–260 (MALLMVLLSLGGLPPFTGFMP), 274–294 (IILLILIAGSIMNLFFYLNII), and 315–335 (SLKFVIPICTLSLGLSPFIML).

Belongs to the complex I subunit 2 family.

The protein localises to the mitochondrion inner membrane. It catalyses the reaction a ubiquinone + NADH + 5 H(+)(in) = a ubiquinol + NAD(+) + 4 H(+)(out). Its function is as follows. Core subunit of the mitochondrial membrane respiratory chain NADH dehydrogenase (Complex I) that is believed to belong to the minimal assembly required for catalysis. Complex I functions in the transfer of electrons from NADH to the respiratory chain. The immediate electron acceptor for the enzyme is believed to be ubiquinone. The sequence is that of NADH-ubiquinone oxidoreductase chain 2 (ND2) from Lumbricus terrestris (Common earthworm).